Reading from the N-terminus, the 334-residue chain is Ketol-acid reductoisomerase (NADP(+)) (334 aa).

One can recognise a KARI N-terminal Rossmann domain in the interval 1–181 (MTTVYYDQSV…GATRAGVLET (181 aa)). NADP(+) is bound by residues 25–28 (YGSQ), Arg48, Ser52, and 82–85 (DEIQ). The active site involves His107. Gly133 serves as a coordination point for NADP(+). The region spanning 182-327 (SFKEETETDL…RELRDMMPFI (146 aa)) is the KARI C-terminal knotted domain. The Mg(2+) site is built by Asp190, Glu194, Glu226, and Glu230. Ser251 lines the substrate pocket.

It belongs to the ketol-acid reductoisomerase family. Mg(2+) serves as cofactor.

The catalysed reaction is (2R)-2,3-dihydroxy-3-methylbutanoate + NADP(+) = (2S)-2-acetolactate + NADPH + H(+). The enzyme catalyses (2R,3R)-2,3-dihydroxy-3-methylpentanoate + NADP(+) = (S)-2-ethyl-2-hydroxy-3-oxobutanoate + NADPH + H(+). The protein operates within amino-acid biosynthesis; L-isoleucine biosynthesis; L-isoleucine from 2-oxobutanoate: step 2/4. It functions in the pathway amino-acid biosynthesis; L-valine biosynthesis; L-valine from pyruvate: step 2/4. Functionally, involved in the biosynthesis of branched-chain amino acids (BCAA). Catalyzes an alkyl-migration followed by a ketol-acid reduction of (S)-2-acetolactate (S2AL) to yield (R)-2,3-dihydroxy-isovalerate. In the isomerase reaction, S2AL is rearranged via a Mg-dependent methyl migration to produce 3-hydroxy-3-methyl-2-ketobutyrate (HMKB). In the reductase reaction, this 2-ketoacid undergoes a metal-dependent reduction by NADPH to yield (R)-2,3-dihydroxy-isovalerate. The polypeptide is Ketol-acid reductoisomerase (NADP(+)) (Staphylococcus saprophyticus subsp. saprophyticus (strain ATCC 15305 / DSM 20229 / NCIMB 8711 / NCTC 7292 / S-41)).